The following is a 294-amino-acid chain: MRALRAGLTLALGAGLGAAAEHWRRREGKAPGLLGRVPLLPVVAADLPALPGGPAGGTGELAKYGLPGVAQLRSRESYVLSYDPRTRGALWVLEQLRPERLRGDGDRSACDFREDDSVHAYHRATNADYRGSGFDRGHLAAAANHRWSQRAMDDTFYLSNVAPQVPHLNQNAWNNLERYSRSLTRTYQNVYVCTGPLFLPRTEADGKSYVKYQVIGKNHVAVPTHFFKVLILEAAGGQIELRSYVMPNAPVDETIPLERFLVPIESIERASGLLFVPNILARAGNLKAITAGSK.

The N-terminal 44 residues, 1-44 (MRALRAGLTLALGAGLGAAAEHWRRREGKAPGLLGRVPLLPVVA), are a transit peptide targeting the mitochondrion. Phosphothreonine is present on Thr125. His138 functions as the Proton acceptor in the catalytic mechanism. A Mg(2+)-binding site is contributed by Asn169. The interval 283 to 293 (AGNLKAITAGS) is essential for deoxyribonuclease activity.

The protein belongs to the DNA/RNA non-specific endonuclease family. Homodimer; disulfide-linked. Homodimerization is essential for its activity. Interacts with YWHAG. The cofactor is Mg(2+). In terms of processing, GSK3-beta-mediated phosphorylation at Thr-125 is necessary for its interaction with YWHAG and the induction of autophagy.

It localises to the mitochondrion. Functionally, endonuclease that preferentially catalyzes the cleavage of double-stranded 5-hydroxymethylcytosine (5hmC)-modified DNA. The 5hmC-modified nucleotide does not increase the binding affinity, but instead increases the efficiency of cutting and specifies the site of cleavage for the modified DNAs. Shows significantly higher affinity for four-stranded Holliday junction over duplex and single-stranded DNAs. Promotes conservative recombination when the DNA is 5hmC-modified. Promotes autophagy through the suppression of mTOR by its phosphorylation-mediated interaction with YWHAG and its endonuclease activity-mediated DNA damage response. GSK3-beta mediated phosphorylation of ENDOG enhances its interaction with YWHAG, leading to the release of TSC2 and PIK3C3 from YWHAG resulting in mTOR pathway suppression and autophagy initiation. Promotes cleavage of mtDNA in response to oxidative and nitrosative stress, in turn inducing compensatory mtDNA replication. In Mus musculus (Mouse), this protein is Endonuclease G, mitochondrial (Endog).